Consider the following 239-residue polypeptide: Probable transcriptional regulatory protein EF_2866 (239 aa).

The protein belongs to the TACO1 family. YeeN subfamily.

Its subcellular location is the cytoplasm. The chain is Probable transcriptional regulatory protein EF_2866 from Enterococcus faecalis (strain ATCC 700802 / V583).